The primary structure comprises 277 residues: Shikimate dehydrogenase (NADP(+)) (277 aa).

Residues 15-17 and Thr62 contribute to the shikimate site; that span reads SLS. Lys66 functions as the Proton acceptor in the catalytic mechanism. Shikimate is bound by residues Asn87 and Asp102. NADP(+)-binding positions include 127-131, 151-156, and Ile219; these read GAGGA and NRTVSK. Tyr221 contributes to the shikimate binding site. Gly242 contributes to the NADP(+) binding site.

The protein belongs to the shikimate dehydrogenase family. In terms of assembly, homodimer.

The enzyme catalyses shikimate + NADP(+) = 3-dehydroshikimate + NADPH + H(+). The protein operates within metabolic intermediate biosynthesis; chorismate biosynthesis; chorismate from D-erythrose 4-phosphate and phosphoenolpyruvate: step 4/7. Involved in the biosynthesis of the chorismate, which leads to the biosynthesis of aromatic amino acids. Catalyzes the reversible NADPH linked reduction of 3-dehydroshikimate (DHSA) to yield shikimate (SA). This chain is Shikimate dehydrogenase (NADP(+)), found in Geobacillus sp. (strain WCH70).